We begin with the raw amino-acid sequence, 512 residues long: Cytochrome P450 84A4 (512 aa).

Residues 7–24 form a helical membrane-spanning segment; sequence LIVLVPLLLFLFPHLLLR. C447 contributes to the heme binding site.

The protein belongs to the cytochrome P450 family. Requires heme as cofactor. As to expression, expressed in seedlings, roots, stems and inflorescence nodes. Low or no expression in leaves, flowers, seeds and lignifying tissue.

It localises to the membrane. In terms of biological role, cytochrome P450 involved in the production of catechol-substituted substrates needed for the arabidopyrones biosynthesis. Converts p-coumaraldehyde into caffealdehyde. This chain is Cytochrome P450 84A4 (CYP84A4), found in Arabidopsis thaliana (Mouse-ear cress).